Reading from the N-terminus, the 41-residue chain is Virescein (41 aa).

A Histidine amide modification is found at H41.

In terms of assembly, monomer. Hemolymph.

The protein resides in the secreted. Its function is as follows. Has antibacterial activity against Gram-positive and Gram-negative bacteria. The chain is Virescein from Heliothis virescens (Tobacco budworm moth).